The primary structure comprises 741 residues: Phosphoribosylformylglycinamidine synthase subunit PurL (741 aa).

Histidine 54 is an active-site residue. 2 residues coordinate ATP: tyrosine 57 and lysine 98. Glutamate 100 contacts Mg(2+). Substrate is bound by residues 101–104 (SHNH) and arginine 123. Histidine 102 functions as the Proton acceptor in the catalytic mechanism. Aspartate 124 serves as a coordination point for Mg(2+). Glutamine 251 lines the substrate pocket. Aspartate 279 is a binding site for Mg(2+). 323 to 325 (ESQ) provides a ligand contact to substrate. Residues aspartate 510 and glycine 547 each coordinate ATP. Asparagine 548 serves as a coordination point for Mg(2+). Serine 550 provides a ligand contact to substrate.

It belongs to the FGAMS family. Monomer. Part of the FGAM synthase complex composed of 1 PurL, 1 PurQ and 2 PurS subunits.

It is found in the cytoplasm. The enzyme catalyses N(2)-formyl-N(1)-(5-phospho-beta-D-ribosyl)glycinamide + L-glutamine + ATP + H2O = 2-formamido-N(1)-(5-O-phospho-beta-D-ribosyl)acetamidine + L-glutamate + ADP + phosphate + H(+). Its pathway is purine metabolism; IMP biosynthesis via de novo pathway; 5-amino-1-(5-phospho-D-ribosyl)imidazole from N(2)-formyl-N(1)-(5-phospho-D-ribosyl)glycinamide: step 1/2. In terms of biological role, part of the phosphoribosylformylglycinamidine synthase complex involved in the purines biosynthetic pathway. Catalyzes the ATP-dependent conversion of formylglycinamide ribonucleotide (FGAR) and glutamine to yield formylglycinamidine ribonucleotide (FGAM) and glutamate. The FGAM synthase complex is composed of three subunits. PurQ produces an ammonia molecule by converting glutamine to glutamate. PurL transfers the ammonia molecule to FGAR to form FGAM in an ATP-dependent manner. PurS interacts with PurQ and PurL and is thought to assist in the transfer of the ammonia molecule from PurQ to PurL. The chain is Phosphoribosylformylglycinamidine synthase subunit PurL from Picrophilus torridus (strain ATCC 700027 / DSM 9790 / JCM 10055 / NBRC 100828 / KAW 2/3).